We begin with the raw amino-acid sequence, 622 residues long: Elongation factor 4 (622 aa).

The 185-residue stretch at Ala-17–Val-201 folds into the tr-type G domain. GTP contacts are provided by residues Asp-29–Thr-34 and Asn-148–Asp-151.

The protein belongs to the TRAFAC class translation factor GTPase superfamily. Classic translation factor GTPase family. LepA subfamily.

The protein localises to the cell membrane. It catalyses the reaction GTP + H2O = GDP + phosphate + H(+). Functionally, required for accurate and efficient protein synthesis under certain stress conditions. May act as a fidelity factor of the translation reaction, by catalyzing a one-codon backward translocation of tRNAs on improperly translocated ribosomes. Back-translocation proceeds from a post-translocation (POST) complex to a pre-translocation (PRE) complex, thus giving elongation factor G a second chance to translocate the tRNAs correctly. Binds to ribosomes in a GTP-dependent manner. This chain is Elongation factor 4, found in Streptomyces coelicolor (strain ATCC BAA-471 / A3(2) / M145).